The primary structure comprises 206 residues: MGGKWSKSSIVGWSTVRERMRKTPPAADGVGAVSQDLDKHGAVTSSNTAFNNPDCAWLEAQEDEDVGFPVRPQVPLRPMTFKGAFDLGFFLKEKGGLDGLIYSKRRQEILDLWVYHTQGFFPDWQNYTPGPGIRYPLTFGWCYKLVPVDPREVEEATEGENNCLLHPVNQHGMEDEHREVLKWKFDSSLARKHVAREMHPEYYKDC.

A lipid anchor (N-myristoyl glycine; by host) is attached at G2. A Phosphoserine; by host modification is found at S6. Residues 62–65 are acidic; interacts with host PACS1 and PACS2; stabilizes the interaction of NEF/MHC-I with host AP1M1; necessary for MHC-I internalization; the sequence is EDED. Residues 69 to 78 are SH3-binding; interaction with Src family tyrosine kinases; that stretch reads PVRPQVPLRP. Positions 72–75 match the PxxP; stabilizes the interaction of NEF/MHC-I with host AP1M1; necessary for MHC-I internalization motif; it reads PQVP. The tract at residues 108–124 is mediates dimerization, Nef-PTE1 interaction; it reads EILDLWVYHTQGFFPDW. Residues 148–180 are binding to ATP6V1H; the sequence is VDPREVEEATEGENNCLLHPVNQHGMEDEHREV. Positions 164 to 165 match the Dileucine internalization motif; necessary for CD4 internalization motif; the sequence is LL. The Diacidic; necessary for CD4 internalization motif lies at 174-175; it reads ED.

This sequence belongs to the lentivirus primate group Nef protein family. As to quaternary structure, monomer; cytosolic form. Homodimer; membrane bound form. Interacts with Nef associated p21-activated kinase (PAK2); this interaction activates PAK2. Associates with the Nef-MHC-I-AP1 complex; this complex is required for MHC-I internalization. Interacts (via C-terminus) with host PI3-kinase. Interacts with host PACS1; this interaction seems to be weak. Interacts with host PACS2. Interacts with host LCK and MAPK3; these interactions inhibit the kinase activity of the latter. Interacts with host ATP6V1H; this interaction may play a role in CD4 endocytosis. Associates with the CD4-Nef-AP2 complex; this complex is required for CD4 internalization. Interacts with host AP2 subunit alpha and AP2 subunit sigma2. Interacts with TCR-zeta chain; this interaction up-regulates the Fas ligand (FasL) surface expression. Interacts with host HCK, LYN, and SRC; these interactions activate the Src family kinases. Interacts with MAP3K5; this interaction inhibits the Fas and TNFR-mediated death signals. Interacts with beta-COP and PTE1. Interacts with human RACK1; this increases Nef phosphorylation by PKC. Interacts with TP53; this interaction decreases the half-life of TP53, protecting the infected cell against p53-mediated apoptosis. The virion-associated Nef proteins are cleaved by the viral protease to release the soluble C-terminal core protein. Nef is probably cleaved concomitantly with viral structural proteins on maturation of virus particles. Post-translationally, myristoylated. In terms of processing, phosphorylated on serine residues, probably by host PKCdelta and theta.

The protein resides in the host cell membrane. The protein localises to the virion. It is found in the secreted. It localises to the host Golgi apparatus membrane. Factor of infectivity and pathogenicity, required for optimal virus replication. Alters numerous pathways of T-lymphocyte function and down-regulates immunity surface molecules in order to evade host defense and increase viral infectivity. Alters the functionality of other immunity cells, like dendritic cells, monocytes/macrophages and NK cells. Its function is as follows. In infected CD4(+) T-lymphocytes, down-regulates the surface MHC-I, mature MHC-II, CD4, CD28, CCR5 and CXCR4 molecules. Mediates internalization and degradation of host CD4 through the interaction of with the cytoplasmic tail of CD4, the recruitment of AP-2 (clathrin adapter protein complex 2), internalization through clathrin coated pits, and subsequent transport to endosomes and lysosomes for degradation. Diverts host MHC-I molecules to the trans-Golgi network-associated endosomal compartments by an endocytic pathway to finally target them for degradation. MHC-I down-regulation may involve AP-1 (clathrin adapter protein complex 1) or possibly Src family kinase-ZAP70/Syk-PI3K cascade recruited by PACS2. In consequence infected cells are masked for immune recognition by cytotoxic T-lymphocytes. Decreasing the number of immune receptors also prevents reinfection by more HIV particles (superinfection). Down-regulates host SERINC3 and SERINC5 thereby excluding these proteins from the viral particles. Virion infectivity is drastically higher when SERINC3 or SERINC5 are excluded from the viral envelope, because these host antiviral proteins impair the membrane fusion event necessary for subsequent virion penetration. Functionally, bypasses host T-cell signaling by inducing a transcriptional program nearly identical to that of anti-CD3 cell activation. Interaction with TCR-zeta chain up-regulates the Fas ligand (FasL). Increasing surface FasL molecules and decreasing surface MHC-I molecules on infected CD4(+) cells send attacking cytotoxic CD8+ T-lymphocytes into apoptosis. In terms of biological role, plays a role in optimizing the host cell environment for viral replication without causing cell death by apoptosis. Protects the infected cells from apoptosis in order to keep them alive until the next virus generation is ready to strike. Inhibits the Fas and TNFR-mediated death signals by blocking MAP3K5/ASK1. Decreases the half-life of TP53, protecting the infected cell against p53-mediated apoptosis. Inhibits the apoptotic signals regulated by the Bcl-2 family proteins through the formation of a Nef/PI3-kinase/PAK2 complex that leads to activation of PAK2 and induces phosphorylation of host BAD. Extracellular Nef protein targets CD4(+) T-lymphocytes for apoptosis by interacting with CXCR4 surface receptors. This chain is Protein Nef, found in Homo sapiens (Human).